We begin with the raw amino-acid sequence, 74 residues long: MKTATHPSYDEVRVQCACGNSFATRSTHKGDIHVEICSACHPFFTGKQKLMDTAGRVERFRRKYAKADKQADKQ.

4 residues coordinate Zn(2+): cysteine 16, cysteine 18, cysteine 37, and cysteine 40.

It belongs to the bacterial ribosomal protein bL31 family. Type A subfamily. In terms of assembly, part of the 50S ribosomal subunit. It depends on Zn(2+) as a cofactor.

Functionally, binds the 23S rRNA. This chain is Large ribosomal subunit protein bL31, found in Koribacter versatilis (strain Ellin345).